We begin with the raw amino-acid sequence, 274 residues long: Tropomyosin (274 aa).

Positions M1–E30 are disordered. Residues M1–Y274 are a coiled coil.

The protein belongs to the tropomyosin family. Homodimer.

In terms of biological role, tropomyosin, in association with the troponin complex, plays a central role in the calcium dependent regulation of muscle contraction. The polypeptide is Tropomyosin (Panulirus stimpsoni (Chinese spiny lobster)).